A 99-amino-acid polypeptide reads, in one-letter code: Small ribosomal subunit protein uS19 (99 aa).

Residues 77–99 (TRTFHGHSGDKKAKVAKGGPGGR) form a disordered region.

This sequence belongs to the universal ribosomal protein uS19 family.

Functionally, protein S19 forms a complex with S13 that binds strongly to the 16S ribosomal RNA. The protein is Small ribosomal subunit protein uS19 of Sorangium cellulosum (strain So ce56) (Polyangium cellulosum (strain So ce56)).